The sequence spans 121 residues: Small ribosomal subunit protein uS13 (121 aa).

Positions 92–121 (RKGLPMRGQRTRTNARTRKGPRRAAQALKK) are disordered.

It belongs to the universal ribosomal protein uS13 family. In terms of assembly, part of the 30S ribosomal subunit. Forms a loose heterodimer with protein S19. Forms two bridges to the 50S subunit in the 70S ribosome.

In terms of biological role, located at the top of the head of the 30S subunit, it contacts several helices of the 16S rRNA. In the 70S ribosome it contacts the 23S rRNA (bridge B1a) and protein L5 of the 50S subunit (bridge B1b), connecting the 2 subunits; these bridges are implicated in subunit movement. Contacts the tRNAs in the A and P-sites. This Burkholderia cenocepacia (strain ATCC BAA-245 / DSM 16553 / LMG 16656 / NCTC 13227 / J2315 / CF5610) (Burkholderia cepacia (strain J2315)) protein is Small ribosomal subunit protein uS13.